The following is a 285-amino-acid chain: Probable glucose uptake protein GlcU (285 aa).

10 consecutive transmembrane segments (helical) span residues 4-21 (FLAI…LFNV), 26-48 (GPYS…VYIF), 52-71 (VLTP…WALG), 84-106 (VSRT…GVIV), 110-132 (WSTI…GVIL), 153-175 (IIIL…LFNV), 180-197 (ALLP…LLTF), 210-227 (IIPG…FISQ), 232-254 (VATS…ILIL), and 266-283 (IVVG…LGIA).

Belongs to the GRP transporter (TC 2.A.7.5) family.

The protein resides in the cell membrane. Functionally, involved in the uptake of glucose. This is Probable glucose uptake protein GlcU (glcU) from Bacillus anthracis.